Here is a 327-residue protein sequence, read N- to C-terminus: Ribosomal RNA large subunit methyltransferase F (327 aa).

The segment at 1–31 (MTHPVTPKNTTRPTPANKPAASTLHPRNPHQ) is disordered.

It belongs to the methyltransferase superfamily. METTL16/RlmF family.

The protein resides in the cytoplasm. It catalyses the reaction adenosine(1618) in 23S rRNA + S-adenosyl-L-methionine = N(6)-methyladenosine(1618) in 23S rRNA + S-adenosyl-L-homocysteine + H(+). In terms of biological role, specifically methylates the adenine in position 1618 of 23S rRNA. This Psychrobacter sp. (strain PRwf-1) protein is Ribosomal RNA large subunit methyltransferase F.